Here is a 165-residue protein sequence, read N- to C-terminus: Phosphopantetheine adenylyltransferase (165 aa).

Substrate is bound at residue Ser10. Residues 10-11 (SF) and His18 each bind ATP. Substrate is bound by residues Lys42, Thr79, and Arg93. ATP is bound by residues 94 to 96 (GLR), Glu104, and 129 to 135 (VRPITAT).

It belongs to the bacterial CoaD family. In terms of assembly, homohexamer. Requires Mg(2+) as cofactor.

The protein resides in the cytoplasm. The enzyme catalyses (R)-4'-phosphopantetheine + ATP + H(+) = 3'-dephospho-CoA + diphosphate. Its pathway is cofactor biosynthesis; coenzyme A biosynthesis; CoA from (R)-pantothenate: step 4/5. Its function is as follows. Reversibly transfers an adenylyl group from ATP to 4'-phosphopantetheine, yielding dephospho-CoA (dPCoA) and pyrophosphate. In Rhodopseudomonas palustris (strain HaA2), this protein is Phosphopantetheine adenylyltransferase.